We begin with the raw amino-acid sequence, 276 residues long: Lectin-like protein At3g16530 (276 aa).

Residues 1–19 (MQIHKLCFLVLFLANAAFA) form the signal peptide. The segment at 20–270 (VKFNFDSFDG…RHDIWSWSFE (251 aa)) is legume-lectin like. Asn79, Asn129, and Asn196 each carry an N-linked (GlcNAc...) asparagine glycan.

The protein belongs to the leguminous lectin family.

It localises to the secreted. Its subcellular location is the extracellular space. It is found in the apoplast. The polypeptide is Lectin-like protein At3g16530 (Arabidopsis thaliana (Mouse-ear cress)).